The chain runs to 373 residues: Alanine dehydrogenase (373 aa).

Substrate is bound by residues Arg15 and Lys74. His95 serves as the catalytic Proton donor/acceptor. NAD(+) contacts are provided by residues Ser133, 177–178, Asp197, Ser219, 238–239, 266–269, and 298–301; these read QA, VL, IAID, and VANM. Asp269 serves as the catalytic Proton donor/acceptor.

It belongs to the AlaDH/PNT family. As to quaternary structure, homohexamer. Trimer of dimer.

The enzyme catalyses L-alanine + NAD(+) + H2O = pyruvate + NH4(+) + NADH + H(+). It participates in amino-acid degradation; L-alanine degradation via dehydrogenase pathway; NH(3) and pyruvate from L-alanine: step 1/1. Functionally, catalyzes the reversible reductive amination of pyruvate to L-alanine. May play a role in cell wall synthesis as L-alanine is an important constituent of the peptidoglycan layer. The sequence is that of Alanine dehydrogenase (ald) from Staphylococcus haemolyticus (strain JCSC1435).